The sequence spans 510 residues: MAGSRQRGLRARVRPLFCALLLSLGRFVRGDGVGGDPAVALPHRRFEYKYSFKGPHLVQSDGTVPFWAHAGNAIPSSDQIRVAPSLKSQRGSVWTKTKAAFENWEVEVTFRVTGRGRIGADGLAIWYAENQGLEGPVFGSADLWNGVGIFFDSFDNDGKKNNPAIVIIGNNGQIHYDHQNDGASQALASCQRDFRNKPYPVRAKITYYQNTLTVMINNGFTPDKNDYEFCAKVENMIIPAQGHFGISAATGGLADDHDVLSFLTFQLTEPGKEPPTPDKEISEKEKEKYQEEFEHFQQELDKKKEEFQKGHPDLQGQPAEEIFESVGDRELRQVFEGQNRIHLEIKQLNRQLDMILDEQRRYVSSLTEEISKRGAGMPGQHGQITQQELDTVVKTQHEILRQVNEMKNSMSETVRLVSGMQHPGSAGGVYETTQHFIDIKEHLHIVKRDIDNLVQRNMPSNEKPKCPELPPFPSCLSTVHFIIFVVVQTVLFIGYIMYRSQQEAAAKKFF.

The signal sequence occupies residues 1–30 (MAGSRQRGLRARVRPLFCALLLSLGRFVRG). Residues 31 to 477 (DGVGGDPAVA…ELPPFPSCLS (447 aa)) are Lumenal-facing. Residues 44-267 (RRFEYKYSFK…DVLSFLTFQL (224 aa)) enclose the L-type lectin-like domain. A carbohydrate is bound by residues S88 and D121. The Ca(2+) site is built by D152, F154, and N156. Residues N156 and H178 each contribute to the a carbohydrate site. D181 contributes to the Ca(2+) binding site. C190 and C230 are oxidised to a cystine. An a carbohydrate-binding site is contributed by 251–253 (GGL). Residue S425 is modified to Phosphoserine. Residues 478–498 (TVHFIIFVVVQTVLFIGYIMY) traverse the membrane as a helical segment. Residues 499–510 (RSQQEAAAKKFF) are Cytoplasmic-facing. A mediates interaction with RAB3GAP1, RAB3GAP2 and UBXN6 region spans residues 499-510 (RSQQEAAAKKFF). Positions 509–510 (FF) match the ER export motif motif.

In terms of assembly, exists both as a covalent disulfide-linked homohexamer, and a complex of three disulfide-linked dimers non-covalently kept together. Interacts with MCFD2. May interact with TMEM115. Interacts with RAB3GAP1 and RAB3GAP2. Interacts with UBXN6. Interacts with SERPINA1/alpha1-antitrypsin. Interacts with BET1. The N-terminal may be partly blocked. As to expression, ubiquitous.

It localises to the endoplasmic reticulum-Golgi intermediate compartment membrane. The protein localises to the golgi apparatus membrane. It is found in the endoplasmic reticulum membrane. In terms of biological role, mannose-specific lectin. May recognize sugar residues of glycoproteins, glycolipids, or glycosylphosphatidyl inositol anchors and may be involved in the sorting or recycling of proteins, lipids, or both. The LMAN1-MCFD2 complex forms a specific cargo receptor for the ER-to-Golgi transport of selected proteins. The polypeptide is Protein ERGIC-53 (LMAN1) (Homo sapiens (Human)).